A 360-amino-acid chain; its full sequence is MNSSSLFGIWLSVPLILSWVTPQVSSSWWYMRAVGSSRVMCDNVPGLVSRQRQLCHRHPEVMRSIGLGVAEWTAECQHQFRQHRWNCHTLDRDHNLFGKVLLRSSREAAFVYAISSAGVVFAITRACSQGELKSCSCDPKKKGTSKDSKGTFDWGGCSDNIDYGIKFARAFVDAKERKGKDARALMNLHNNRAGRKAVKRFLKQECKCHGVSGSCTLRTCWLAMADFRKTGDYLWKKYNGAIQVVMNQDGTGFTVANKRFKKPTKNDLVYFENSPDYCIRDRDAGSLGTAGRVCNLTSRGMDSCEVMCCGRGYDTSRVTRMTKCECKFHWCCAVRCQDCLEVVDVHTCKAPKSPDWVAPT.

An N-terminal signal peptide occupies residues Met-1 to Ser-26. 11 cysteine pairs are disulfide-bonded: Cys-76-Cys-87, Cys-127-Cys-135, Cys-137-Cys-157, Cys-206-Cys-220, Cys-208-Cys-215, Cys-278-Cys-309, Cys-294-Cys-304, Cys-308-Cys-348, Cys-324-Cys-339, Cys-326-Cys-336, and Cys-331-Cys-332. Ser-212 carries the O-palmitoleoyl serine; by PORCN lipid modification. Asn-295 carries N-linked (GlcNAc...) asparagine glycosylation.

This sequence belongs to the Wnt family. In terms of processing, palmitoleoylation is required for efficient binding to frizzled receptors. Depalmitoleoylation leads to Wnt signaling pathway inhibition.

It localises to the secreted. It is found in the extracellular space. The protein localises to the extracellular matrix. In terms of biological role, ligand for members of the frizzled family of seven transmembrane receptors. Functions in the canonical Wnt signaling pathway that results in activation of transcription factors of the TCF/LEF family. Functions as a upstream regulator of FGF10 expression. Plays an important role in embryonic lung development. May contribute to embryonic brain development by regulating the proliferation of dopaminergic precursors and neurons. The polypeptide is Protein Wnt-2 (WNT2) (Monodelphis domestica (Gray short-tailed opossum)).